The chain runs to 163 residues: MAETKKMIILKSSDGESFEVEEAVAVESQTIKHMIEDDCVDNGIPLPNVTGAILAKVIEYCKKHVEAAAEAGGDKDFYGSTENHELKTWDNDFVKVDHPTLFDLLRAANYLNISGLLDLTCKAVADQMRGKTPAQMREHFNIKNDYTPEEEAEVRNENRWAFE.

Residues 105–163 (LRAANYLNISGLLDLTCKAVADQMRGKTPAQMREHFNIKNDYTPEEEAEVRNENRWAFE) form an interaction with the F-box domain of F-box proteins region.

It belongs to the SKP1 family. In terms of assembly, part of a SCF (SKP1-cullin-F-box) protein ligase complex. Interacts with ADO3/FKF1 and At3g61590. Highly expressed in siliques.

It is found in the nucleus. Its pathway is protein modification; protein ubiquitination. Its function is as follows. Involved in ubiquitination and subsequent proteasomal degradation of target proteins. Together with CUL1, RBX1 and a F-box protein, it forms a SCF E3 ubiquitin ligase complex. The functional specificity of this complex depends on the type of F-box protein. In the SCF complex, it serves as an adapter that links the F-box protein to CUL1. The polypeptide is SKP1-like protein 3 (ASK3) (Arabidopsis thaliana (Mouse-ear cress)).